The primary structure comprises 106 residues: ATP-dependent Clp protease adapter protein ClpS (106 aa).

The segment covering 1-13 (MGNNSTWSQSENL) has biased composition (polar residues). The segment at 1–21 (MGNNSTWSQSENLTADKQKEK) is disordered.

This sequence belongs to the ClpS family. As to quaternary structure, binds to the N-terminal domain of the chaperone ClpA.

Its function is as follows. Involved in the modulation of the specificity of the ClpAP-mediated ATP-dependent protein degradation. The polypeptide is ATP-dependent Clp protease adapter protein ClpS (Pectobacterium carotovorum subsp. carotovorum (strain PC1)).